The sequence spans 376 residues: Cyclin-dependent kinase 9-A (376 aa).

In terms of domain architecture, Protein kinase spans 19 to 319 (YERLAKIGQG…SDDALNNDFF (301 aa)). Residues 25–33 (IGQGTFGEV) and lysine 48 each bind ATP. The Proton acceptor role is filled by aspartate 153. Residues 345–376 (PPRRRGGHMPQQPANQARNPAATNQSEFERVF) are disordered. The span at 354–369 (PQQPANQARNPAATNQ) shows a compositional bias: low complexity.

Belongs to the protein kinase superfamily. CMGC Ser/Thr protein kinase family. CDC2/CDKX subfamily. As to quaternary structure, associates with cyclin-T to form P-TEFb.

Its subcellular location is the nucleus. It catalyses the reaction L-seryl-[protein] + ATP = O-phospho-L-seryl-[protein] + ADP + H(+). It carries out the reaction L-threonyl-[protein] + ATP = O-phospho-L-threonyl-[protein] + ADP + H(+). The catalysed reaction is [DNA-directed RNA polymerase] + ATP = phospho-[DNA-directed RNA polymerase] + ADP + H(+). Functionally, member of the cyclin-dependent kinase pair (CDK9/cyclin-T) complex, also called positive transcription elongation factor B (P-TEFb), which is proposed to facilitate the transition from abortive to production elongation by phosphorylating the CTD (C-terminal domain) of the large subunit of RNA polymerase II (RNAP II) and SUPT5H. The chain is Cyclin-dependent kinase 9-A (cdk9-a) from Xenopus laevis (African clawed frog).